Here is a 178-residue protein sequence, read N- to C-terminus: Cytochrome b6-f complex iron-sulfur subunit (178 aa).

The helical transmembrane segment at 20 to 42 (LLTFGTATGVALGALYPVANYFM) threads the bilayer. The region spanning 65–161 (KTGWLATHQA…VDIEDDAVLV (97 aa)) is the Rieske domain. The [2Fe-2S] cluster site is built by Cys107, His109, Cys125, and His128. The cysteines at positions 112 and 127 are disulfide-linked.

This sequence belongs to the Rieske iron-sulfur protein family. In terms of assembly, the 4 large subunits of the cytochrome b6-f complex are cytochrome b6, subunit IV (17 kDa polypeptide, PetD), cytochrome f and the Rieske protein, while the 4 small subunits are PetG, PetL, PetM and PetN. The complex functions as a dimer. It depends on [2Fe-2S] cluster as a cofactor.

The protein resides in the cellular thylakoid membrane. It catalyses the reaction 2 oxidized [plastocyanin] + a plastoquinol + 2 H(+)(in) = 2 reduced [plastocyanin] + a plastoquinone + 4 H(+)(out). Its function is as follows. Component of the cytochrome b6-f complex, which mediates electron transfer between photosystem II (PSII) and photosystem I (PSI), cyclic electron flow around PSI, and state transitions. In Prochlorococcus marinus (strain MIT 9215), this protein is Cytochrome b6-f complex iron-sulfur subunit.